Reading from the N-terminus, the 207-residue chain is Outer-membrane lipoprotein LolB (207 aa).

A signal peptide spans 1 to 21; it reads MPMRKRHFYRLLPLASLLLAA. A lipid anchor (N-palmitoyl cysteine) is attached at Cys22. A lipid anchor (S-diacylglycerol cysteine) is attached at Cys22.

It belongs to the LolB family. In terms of assembly, monomer.

It is found in the cell outer membrane. Its function is as follows. Plays a critical role in the incorporation of lipoproteins in the outer membrane after they are released by the LolA protein. The protein is Outer-membrane lipoprotein LolB of Yersinia pseudotuberculosis serotype IB (strain PB1/+).